Consider the following 344-residue polypeptide: tRNA N6-adenosine threonylcarbamoyltransferase (344 aa).

The Fe cation site is built by H119 and H123. Substrate-binding positions include 141–145 (VVSGG), D174, G187, D191, and N280. Fe cation is bound at residue D310.

Belongs to the KAE1 / TsaD family. Requires Fe(2+) as cofactor.

Its subcellular location is the cytoplasm. It catalyses the reaction L-threonylcarbamoyladenylate + adenosine(37) in tRNA = N(6)-L-threonylcarbamoyladenosine(37) in tRNA + AMP + H(+). In terms of biological role, required for the formation of a threonylcarbamoyl group on adenosine at position 37 (t(6)A37) in tRNAs that read codons beginning with adenine. Is involved in the transfer of the threonylcarbamoyl moiety of threonylcarbamoyl-AMP (TC-AMP) to the N6 group of A37, together with TsaE and TsaB. TsaD likely plays a direct catalytic role in this reaction. This Listeria monocytogenes serovar 1/2a (strain ATCC BAA-679 / EGD-e) protein is tRNA N6-adenosine threonylcarbamoyltransferase.